The chain runs to 208 residues: uncharacterized protein (208 aa).

Over residues 118-134 the composition is skewed to low complexity; sequence QYPNQYQQQPQQQQPGY. The disordered stretch occupies residues 118–208; the sequence is QYPNQYQQQP…HKKEKNEIKE (91 aa). Positions 138-175 are enriched in polar residues; the sequence is NYNQPPVQLNKQAYDNYQQNDYKSNNQPNLAKENNISN. Residues 187–201 show a composition bias toward basic residues; it reads KKEKKHSFFSKLHKK.

This is an uncharacterized protein from Dictyostelium discoideum (Social amoeba).